A 1826-amino-acid chain; its full sequence is ATPase family AAA domain-containing protein 5 (1826 aa).

Phosphoserine is present on Ser44. A Glycyl lysine isopeptide (Lys-Gly) (interchain with G-Cter in SUMO2) cross-link involves residue Lys127. 7 disordered regions span residues Ser170 to Asp254, Pro282 to Ser311, Ala323 to Asn367, Gln398 to Ser572, Arg588 to Ser623, Lys647 to Asn684, and Val709 to Glu729. Ser215 carries the post-translational modification Phosphoserine. The segment covering Asn243–Asp254 has biased composition (basic and acidic residues). Positions Ser298–Ser311 are enriched in low complexity. Ser351 and Ser366 each carry phosphoserine. Positions Lys365 to Glu381 are interaction with WDR48. The segment covering Lys418–Ile442 has biased composition (basic and acidic residues). Positions Pro445–Leu456 are enriched in polar residues. The segment covering His459 to Glu468 has biased composition (basic and acidic residues). The span at Lys469 to Arg481 shows a compositional bias: basic residues. Residues Asn487–Gln505 are compositionally biased toward basic and acidic residues. The segment covering Asp540 to Thr559 has biased composition (polar residues). Phosphoserine occurs at positions 591 and 603. Ser727 and Ser801 each carry phosphoserine. Residues Gly965–Thr1034 are disordered. The segment covering Glu1006–Ile1019 has biased composition (basic and acidic residues). Ser1104 bears the Phosphoserine mark. Residue Gly1119–Thr1126 participates in ATP binding. Residues Tyr1183–Lys1216 form a disordered region. An LXCXE motif motif is present at residues Leu1415 to Glu1419. Disordered stretches follow at residues Pro1527–Lys1552 and Ser1592–Pro1611. The interaction with RAD51 and RFC5 stretch occupies residues Pro1612–Glu1701.

The protein belongs to the AAA ATPase family. Component of a heteropentameric replication factor ATAD5 RFC-like complex composed of one large subunit (ATAD5) and four small subunits (RFC2, RFC3, RFC4 and RFC5). Within the ATAD5 RFC-like complex, interacts with RFC2, RFC4 and RFC5. Within the ATAD5 RFC-like complex, interacts directly via-N terminal with RAD51; the interactions is enhanced under replication stress. Interacts with RB1 predominantly in G1 phase via its LXCXE motif. Interacts with RAD9A in growing cells. The interaction with RAD9A is reduced after exposure to DNA replication-inhibiting agents. Interacts with BRD4. Interacts with PCNA. Interacts with deubiquitinating enzyme USP1, and its associated factor, WDR48. ATR may stimulate the RAD9A dissociation. As to expression, expressed ubiquitously in all cell lines like teratocarcinoma, cell lymphoma, lymphoma.

Its subcellular location is the nucleus. Has an important role in DNA replication and in maintaining genome integrity during replication stress. Involved in a RAD9A-related damage checkpoint, a pathway that is important in determining whether DNA damage is compatible with cell survival or whether it requires cell elimination by apoptosis. Modulates the RAD9A interaction with BCL2 and thereby induces DNA damage-induced apoptosis. Promotes PCNA deubiquitination by recruiting the ubiquitin-specific protease 1 (USP1) and WDR48 thereby down-regulating the error-prone damage bypass pathway. As component of the ATAD5 RFC-like complex, regulates the function of the DNA polymerase processivity factor PCNA by unloading the ring-shaped PCNA homotrimer from DNA after replication during the S phase of the cell cycle. This seems to be dependent on its ATPase activity. Plays important roles in restarting stalled replication forks under replication stress, by unloading the PCNA homotrimer from DNA and recruiting RAD51 possibly through an ATR-dependent manner. Ultimately this enables replication fork regression, breakage, and eventual fork restart. Both the PCNA unloading activity and the interaction with WDR48 are required to efficiently recruit RAD51 to stalled replication forks. Promotes the generation of MUS81-mediated single-stranded DNA-associated breaks in response to replication stress, which is an alternative pathway to restart stalled/regressed replication forks. In Mus musculus (Mouse), this protein is ATPase family AAA domain-containing protein 5 (Atad5).